A 439-amino-acid polypeptide reads, in one-letter code: Probable aspartic proteinase GIP2 (439 aa).

Positions 1–23 are cleaved as a signal peptide; it reads MASSCCLHAILLCSLLFITSTTA. One can recognise a Peptidase A1 domain in the interval 47-420; sequence YLTQIQQRTP…DLARSRLGFT (374 aa). 4 N-linked (GlcNAc...) asparagine glycosylation sites follow: N116, N280, N323, and N434.

It belongs to the peptidase A1 family. In terms of assembly, interacts with the Phytophtora parasitica xyloglucanase XEG1 and xyloglucanase-like XLP1. Possesses stronger binding affinity with XLP1, a truncated paralog of P.parasitica XEG1 which has no enzyme activity.

The protein resides in the secreted. Its subcellular location is the extracellular space. The protein localises to the apoplast. Its function is as follows. Involved in plant defense against Phytophtora parasitica. Contributes positively to Nicotiana resistance against P.parasitica. Binds the P.parasitica xyloglucanase XEG1 and inhibits its cell wall degrading enzyme activity and its contribution as P.parasitica virulence factor. XEG1 acts as an important virulence factor during P.parasitica infection but also acts as a pathogen-associated molecular pattern (PAMP) in Nictotiana species, where it can trigger defense responses including cell death. Functionally, (Microbial infection) Possesses stronger binding affinity with XLP1, a truncated paralog of P.parasitica XEG1 which has no enzyme activity. Is impaired in its inhibitor activity towards the P.parasitica xyloglucanase XEG1 when hijacked by XLP1 binding. The chain is Probable aspartic proteinase GIP2 from Nicotiana benthamiana.